The chain runs to 600 residues: Protein GPR107 (600 aa).

The first 39 residues, 1 to 39, serve as a signal peptide directing secretion; it reads MAALAPVGSPASRGPRLAAGLRLLPMLGLLQLLAEPGLG. Residues 40-263 are Extracellular-facing; sequence RVHHLALKDD…YLSAGEIPLP (224 aa). N-linked (GlcNAc...) asparagine glycosylation is found at Asn-70 and Asn-169. Cysteines 109 and 228 form a disulfide. Over residues 157 to 175 the composition is skewed to polar residues; it reads SQEPNVNPASAGNQTQKTQ. Residues 157-185 are disordered; sequence SQEPNVNPASAGNQTQKTQDGGKSKRSTV. Residues 176–185 are compositionally biased toward basic and acidic residues; it reads DGGKSKRSTV. N-linked (GlcNAc...) asparagine glycosylation occurs at Asn-211. The chain crosses the membrane as a helical span at residues 264 to 284; that stretch reads KLYISMAFFFFLSGTIWIHIL. At 285–293 the chain is on the cytoplasmic side; the sequence is RKRRNDVFK. Residues 294–314 traverse the membrane as a helical segment; it reads IHWLMAALPFTKSLSLVFHAI. The Extracellular segment spans residues 315-337; the sequence is DYHYISSQGFPIEGWAVVYYITH. Residues 338 to 358 form a helical membrane-spanning segment; the sequence is LLKGALLFITIALIGTGWAFI. Residues 359–368 are Cytoplasmic-facing; the sequence is KHILSDKDKK. A helical transmembrane segment spans residues 369 to 389; it reads IFMIVIPLQVLANVAYIIIES. Topologically, residues 390 to 402 are extracellular; that stretch reads TEEGTTEYGLWKD. A helical transmembrane segment spans residues 403–423; the sequence is SLFLVDLLCCGAILFPVVWSI. The Cytoplasmic portion of the chain corresponds to 424 to 498; it reads RHLQEASATD…AKLKLFRHYY (75 aa). A helical transmembrane segment spans residues 499–519; that stretch reads VLIVCYIYFTRIIAFLLKLAV. Topologically, residues 520–524 are extracellular; that stretch reads PFQWK. The chain crosses the membrane as a helical span at residues 525 to 544; the sequence is WLYQLLDETATLVFFVLTGY. Over 545 to 600 the chain is Cytoplasmic; sequence KFRPASDNPYLQLSQEEEDLEMESVVTTSGVMESMKKVKKVTNGSVEPQGEWEGAV.

It belongs to the LU7TM family. Post-translationally, cleaved by FURIN to yield two fragments of 17 and 35 kDa that remain associated via a disulfide bond.

The protein localises to the cell membrane. Its subcellular location is the golgi apparatus. It localises to the trans-Golgi network membrane. Its function is as follows. Has been proposed to act as a receptor for neuronostatin, a peptide derived from the somatostatin/SST precursor. Involved in blood sugar regulation through the induction of glucagon in response to low glucose. Functionally, (Microbial infection) Required for intoxication by Pseudomonas aeruginosa exotoxin A and Campylobacter jejuni CDT. May contribute to the retrograde transport of bacterial toxins, including cholera toxin, from the trans-Golgi network to the endoplasmic reticulum. In Homo sapiens (Human), this protein is Protein GPR107 (GPR107).